The sequence spans 124 residues: Large ribosomal subunit protein uL18 (124 aa).

This sequence belongs to the universal ribosomal protein uL18 family. As to quaternary structure, part of the 50S ribosomal subunit; part of the 5S rRNA/L5/L18/L25 subcomplex. Contacts the 5S and 23S rRNAs.

Functionally, this is one of the proteins that bind and probably mediate the attachment of the 5S RNA into the large ribosomal subunit, where it forms part of the central protuberance. This is Large ribosomal subunit protein uL18 from Caldicellulosiruptor saccharolyticus (strain ATCC 43494 / DSM 8903 / Tp8T 6331).